Consider the following 65-residue polypeptide: Large ribosomal subunit protein bL35 (65 aa).

It belongs to the bacterial ribosomal protein bL35 family.

The polypeptide is Large ribosomal subunit protein bL35 (Methylobacillus flagellatus (strain ATCC 51484 / DSM 6875 / VKM B-1610 / KT)).